A 361-amino-acid polypeptide reads, in one-letter code: Chorismate synthase (361 aa).

Arg48 and Arg54 together coordinate NADP(+). FMN-binding positions include 125-127 (RSS), 238-239 (NA), Gly278, 293-297 (KPTSS), and Arg319.

Belongs to the chorismate synthase family. As to quaternary structure, homotetramer. FMNH2 is required as a cofactor.

It catalyses the reaction 5-O-(1-carboxyvinyl)-3-phosphoshikimate = chorismate + phosphate. It participates in metabolic intermediate biosynthesis; chorismate biosynthesis; chorismate from D-erythrose 4-phosphate and phosphoenolpyruvate: step 7/7. Functionally, catalyzes the anti-1,4-elimination of the C-3 phosphate and the C-6 proR hydrogen from 5-enolpyruvylshikimate-3-phosphate (EPSP) to yield chorismate, which is the branch point compound that serves as the starting substrate for the three terminal pathways of aromatic amino acid biosynthesis. This reaction introduces a second double bond into the aromatic ring system. The polypeptide is Chorismate synthase (Yersinia pseudotuberculosis serotype IB (strain PB1/+)).